Here is a 284-residue protein sequence, read N- to C-terminus: Extracellular metalloprotease VDBG_01143 (284 aa).

The first 18 residues, 1–18 (MLFKSLFVAAATAVGVSG), serve as a signal peptide directing secretion. The N-linked (GlcNAc...) asparagine glycan is linked to Asn58. Residue His200 participates in Zn(2+) binding. Glu201 is a catalytic residue. Residue His204 coordinates Zn(2+). A disulfide bond links Cys236 and Cys263.

This sequence belongs to the peptidase M43B family.

It localises to the secreted. Functionally, secreted metalloproteinase that allows assimilation of proteinaceous substrates. The protein is Extracellular metalloprotease VDBG_01143 of Verticillium alfalfae (strain VaMs.102 / ATCC MYA-4576 / FGSC 10136) (Verticillium wilt of alfalfa).